Here is a 423-residue protein sequence, read N- to C-terminus: Glutamate-1-semialdehyde 2,1-aminomutase (423 aa).

Lys-266 is modified (N6-(pyridoxal phosphate)lysine).

It belongs to the class-III pyridoxal-phosphate-dependent aminotransferase family. HemL subfamily. In terms of assembly, homodimer. It depends on pyridoxal 5'-phosphate as a cofactor.

It is found in the cytoplasm. The catalysed reaction is (S)-4-amino-5-oxopentanoate = 5-aminolevulinate. Its pathway is porphyrin-containing compound metabolism; protoporphyrin-IX biosynthesis; 5-aminolevulinate from L-glutamyl-tRNA(Glu): step 2/2. The protein is Glutamate-1-semialdehyde 2,1-aminomutase of Nitratidesulfovibrio vulgaris (strain ATCC 29579 / DSM 644 / CCUG 34227 / NCIMB 8303 / VKM B-1760 / Hildenborough) (Desulfovibrio vulgaris).